Reading from the N-terminus, the 141-residue chain is Large ribosomal subunit protein uL11 (141 aa).

This sequence belongs to the universal ribosomal protein uL11 family. In terms of assembly, part of the ribosomal stalk of the 50S ribosomal subunit. Interacts with L10 and the large rRNA to form the base of the stalk. L10 forms an elongated spine to which L12 dimers bind in a sequential fashion forming a multimeric L10(L12)X complex. In terms of processing, one or more lysine residues are methylated.

Functionally, forms part of the ribosomal stalk which helps the ribosome interact with GTP-bound translation factors. This is Large ribosomal subunit protein uL11 from Chlorobaculum parvum (strain DSM 263 / NCIMB 8327) (Chlorobium vibrioforme subsp. thiosulfatophilum).